We begin with the raw amino-acid sequence, 130 residues long: Iron-sulfur cluster insertion protein ErpA 2 (130 aa).

Positions 58, 122, and 124 each coordinate iron-sulfur cluster.

Belongs to the HesB/IscA family. Homodimer. The cofactor is iron-sulfur cluster.

Required for insertion of 4Fe-4S clusters for at least IspG. In Methylococcus capsulatus (strain ATCC 33009 / NCIMB 11132 / Bath), this protein is Iron-sulfur cluster insertion protein ErpA 2.